The sequence spans 184 residues: Photosystem I assembly protein Ycf4 (184 aa).

2 helical membrane passes run tyrosine 21–serine 41 and isoleucine 63–isoleucine 83.

This sequence belongs to the Ycf4 family.

Its subcellular location is the plastid. It is found in the chloroplast thylakoid membrane. Seems to be required for the assembly of the photosystem I complex. This Gracilaria tenuistipitata var. liui (Red alga) protein is Photosystem I assembly protein Ycf4.